Consider the following 244-residue polypeptide: Protein A47 (244 aa).

Belongs to the orthopoxvirus A47 protein family.

The sequence is that of Protein A47 from Variola virus.